The primary structure comprises 157 residues: Protein NrdI (157 aa).

It belongs to the NrdI family.

Its function is as follows. Probably involved in ribonucleotide reductase function. In Mycoplasma capricolum subsp. capricolum (strain California kid / ATCC 27343 / NCTC 10154), this protein is Protein NrdI.